The sequence spans 192 residues: MRIERVSTDQFKIFLTFDDLIERGFTREDLWHDASNVRSLFSDMMYEASSELGIELEGMLLVQVHLMQAQGMHIFVTQQYEDNSEDEDYIEMKVTLDESKELIFSFMDFEDIISVTSYLDPMGLENIRLYYMEDRYYMILDHIELSRVDKEDIIGVMSEYANPSIVTSHRIEEYGKLIMEENTVQQIKRFFY.

This sequence belongs to the MecA family. In terms of assembly, homodimer.

Functionally, enables the recognition and targeting of unfolded and aggregated proteins to the ClpC protease or to other proteins involved in proteolysis. Acts negatively in the development of competence by binding ComK and recruiting it to the ClpCP protease. When overexpressed, inhibits sporulation. Also involved in Spx degradation by ClpC. The protein is Adapter protein MecA of Oceanobacillus iheyensis (strain DSM 14371 / CIP 107618 / JCM 11309 / KCTC 3954 / HTE831).